A 158-amino-acid chain; its full sequence is NAD(P)H-quinone oxidoreductase subunit J, chloroplastic (158 aa).

It belongs to the complex I 30 kDa subunit family. As to quaternary structure, NDH is composed of at least 16 different subunits, 5 of which are encoded in the nucleus.

It is found in the plastid. Its subcellular location is the chloroplast thylakoid membrane. The enzyme catalyses a plastoquinone + NADH + (n+1) H(+)(in) = a plastoquinol + NAD(+) + n H(+)(out). It carries out the reaction a plastoquinone + NADPH + (n+1) H(+)(in) = a plastoquinol + NADP(+) + n H(+)(out). In terms of biological role, NDH shuttles electrons from NAD(P)H:plastoquinone, via FMN and iron-sulfur (Fe-S) centers, to quinones in the photosynthetic chain and possibly in a chloroplast respiratory chain. The immediate electron acceptor for the enzyme in this species is believed to be plastoquinone. Couples the redox reaction to proton translocation, and thus conserves the redox energy in a proton gradient. The polypeptide is NAD(P)H-quinone oxidoreductase subunit J, chloroplastic (Helianthus annuus (Common sunflower)).